A 510-amino-acid polypeptide reads, in one-letter code: Amidophosphoribosyltransferase (510 aa).

The Nucleophile role is filled by cysteine 2. Residues cysteine 2–aspartate 239 enclose the Glutamine amidotransferase type-2 domain. The Mg(2+) site is built by aspartate 373 and aspartate 374.

In the C-terminal section; belongs to the purine/pyrimidine phosphoribosyltransferase family. Mg(2+) serves as cofactor.

The enzyme catalyses 5-phospho-beta-D-ribosylamine + L-glutamate + diphosphate = 5-phospho-alpha-D-ribose 1-diphosphate + L-glutamine + H2O. It functions in the pathway purine metabolism; IMP biosynthesis via de novo pathway; N(1)-(5-phospho-D-ribosyl)glycinamide from 5-phospho-alpha-D-ribose 1-diphosphate: step 1/2. In Lachancea kluyveri (Yeast), this protein is Amidophosphoribosyltransferase (ADE4).